The chain runs to 334 residues: Hematopoietic SH2 domain-containing protein (334 aa).

One can recognise an SH2 domain in the interval W34–C125. Disordered stretches follow at residues E157 to F181 and E254 to R280. The segment covering A258–A267 has biased composition (polar residues).

As to quaternary structure, interacts with FES and TNK2. In terms of processing, may be phosphorylated by FES and ACK1. As to expression, predominantly expressed in spleen and thymus. Appears not to be expressed in heart, brain, liver, kidney, embryo, lung and ovary.

The protein resides in the cytoplasm. It is found in the mitochondrion. Adapter protein involved in tyrosine kinase and CD28 signaling. May be a modulator of the apoptotic response through its ability to affect mitochondrial stability. This chain is Hematopoietic SH2 domain-containing protein (Hsh2d), found in Mus musculus (Mouse).